Here is a 72-residue protein sequence, read N- to C-terminus: Translation initiation factor IF-1 (72 aa).

The region spanning 1–72 (MAKEESIEIE…SKGRITYRYK (72 aa)) is the S1-like domain.

This sequence belongs to the IF-1 family. Component of the 30S ribosomal translation pre-initiation complex which assembles on the 30S ribosome in the order IF-2 and IF-3, IF-1 and N-formylmethionyl-tRNA(fMet); mRNA recruitment can occur at any time during PIC assembly.

The protein resides in the cytoplasm. In terms of biological role, one of the essential components for the initiation of protein synthesis. Stabilizes the binding of IF-2 and IF-3 on the 30S subunit to which N-formylmethionyl-tRNA(fMet) subsequently binds. Helps modulate mRNA selection, yielding the 30S pre-initiation complex (PIC). Upon addition of the 50S ribosomal subunit IF-1, IF-2 and IF-3 are released leaving the mature 70S translation initiation complex. The sequence is that of Translation initiation factor IF-1 from Chlorobium phaeovibrioides (strain DSM 265 / 1930) (Prosthecochloris vibrioformis (strain DSM 265)).